Reading from the N-terminus, the 221-residue chain is PKHD-type hydroxylase PMT9312_1262 (221 aa).

Positions 80 to 174 (IIHGIMFTKS…RLVCVGWIES (95 aa)) constitute a Fe2OG dioxygenase domain. His98, Asp100, and His155 together coordinate Fe cation. A 2-oxoglutarate-binding site is contributed by Arg165.

Fe(2+) is required as a cofactor. It depends on L-ascorbate as a cofactor.

In Prochlorococcus marinus (strain MIT 9312), this protein is PKHD-type hydroxylase PMT9312_1262.